Reading from the N-terminus, the 195-residue chain is Guanylate kinase (195 aa).

A Guanylate kinase-like domain is found at 7–186 (GVLLVLSSPS…SVEEISSILD (180 aa)). 14–21 (SPSGAGKT) provides a ligand contact to ATP.

The protein belongs to the guanylate kinase family.

Its subcellular location is the cytoplasm. The enzyme catalyses GMP + ATP = GDP + ADP. Essential for recycling GMP and indirectly, cGMP. The protein is Guanylate kinase of Wolbachia sp. subsp. Brugia malayi (strain TRS).